A 453-amino-acid polypeptide reads, in one-letter code: tRNA-2-methylthio-N(6)-dimethylallyladenosine synthase (453 aa).

An MTTase N-terminal domain is found at 11-131 (KSFHVKSFGC…LPQLVADAAE (121 aa)). Positions 20, 56, 94, 167, 171, and 174 each coordinate [4Fe-4S] cluster. The Radical SAM core domain occupies 153–385 (RRQGPTAFLT…QALLNEQQHR (233 aa)). The 62-residue stretch at 388–449 (LATVGKRCEV…PNSLSGALVE (62 aa)) folds into the TRAM domain.

Belongs to the methylthiotransferase family. MiaB subfamily. In terms of assembly, monomer. Requires [4Fe-4S] cluster as cofactor.

The protein localises to the cytoplasm. The enzyme catalyses N(6)-dimethylallyladenosine(37) in tRNA + (sulfur carrier)-SH + AH2 + 2 S-adenosyl-L-methionine = 2-methylsulfanyl-N(6)-dimethylallyladenosine(37) in tRNA + (sulfur carrier)-H + 5'-deoxyadenosine + L-methionine + A + S-adenosyl-L-homocysteine + 2 H(+). Its function is as follows. Catalyzes the methylthiolation of N6-(dimethylallyl)adenosine (i(6)A), leading to the formation of 2-methylthio-N6-(dimethylallyl)adenosine (ms(2)i(6)A) at position 37 in tRNAs that read codons beginning with uridine. The chain is tRNA-2-methylthio-N(6)-dimethylallyladenosine synthase from Rhizorhabdus wittichii (strain DSM 6014 / CCUG 31198 / JCM 15750 / NBRC 105917 / EY 4224 / RW1) (Sphingomonas wittichii).